A 183-amino-acid polypeptide reads, in one-letter code: Crossover junction endodeoxyribonuclease RuvC (183 aa).

Catalysis depends on residues D16, E75, and D147. Residues D16, E75, and D147 each contribute to the Mg(2+) site.

The protein belongs to the RuvC family. Homodimer which binds Holliday junction (HJ) DNA. The HJ becomes 2-fold symmetrical on binding to RuvC with unstacked arms; it has a different conformation from HJ DNA in complex with RuvA. In the full resolvosome a probable DNA-RuvA(4)-RuvB(12)-RuvC(2) complex forms which resolves the HJ. The cofactor is Mg(2+).

It is found in the cytoplasm. It carries out the reaction Endonucleolytic cleavage at a junction such as a reciprocal single-stranded crossover between two homologous DNA duplexes (Holliday junction).. Its function is as follows. The RuvA-RuvB-RuvC complex processes Holliday junction (HJ) DNA during genetic recombination and DNA repair. Endonuclease that resolves HJ intermediates. Cleaves cruciform DNA by making single-stranded nicks across the HJ at symmetrical positions within the homologous arms, yielding a 5'-phosphate and a 3'-hydroxyl group; requires a central core of homology in the junction. The consensus cleavage sequence is 5'-(A/T)TT(C/G)-3'. Cleavage occurs on the 3'-side of the TT dinucleotide at the point of strand exchange. HJ branch migration catalyzed by RuvA-RuvB allows RuvC to scan DNA until it finds its consensus sequence, where it cleaves and resolves the cruciform DNA. The polypeptide is Crossover junction endodeoxyribonuclease RuvC (Azoarcus sp. (strain BH72)).